The sequence spans 341 residues: Methionine import ATP-binding protein MetN 1 (341 aa).

The ABC transporter domain maps to 2–241 (IEFKNVNKVF…PQTNTAKNFV (240 aa)). 38 to 45 (GYSGAGKS) provides a ligand contact to ATP.

Belongs to the ABC transporter superfamily. Methionine importer (TC 3.A.1.24) family. The complex is composed of two ATP-binding proteins (MetN), two transmembrane proteins (MetI) and a solute-binding protein (MetQ).

It is found in the cell membrane. The catalysed reaction is L-methionine(out) + ATP + H2O = L-methionine(in) + ADP + phosphate + H(+). It catalyses the reaction D-methionine(out) + ATP + H2O = D-methionine(in) + ADP + phosphate + H(+). Part of the ABC transporter complex MetNIQ involved in methionine import. Responsible for energy coupling to the transport system. The chain is Methionine import ATP-binding protein MetN 1 from Staphylococcus epidermidis (strain ATCC 35984 / DSM 28319 / BCRC 17069 / CCUG 31568 / BM 3577 / RP62A).